The sequence spans 143 residues: Ribosome-binding factor A (143 aa).

The interval 123 to 143 (DNSLQENYKDSDKETKVEKLR) is disordered.

It belongs to the RbfA family. Monomer. Binds 30S ribosomal subunits, but not 50S ribosomal subunits or 70S ribosomes.

The protein localises to the cytoplasm. Its function is as follows. One of several proteins that assist in the late maturation steps of the functional core of the 30S ribosomal subunit. Associates with free 30S ribosomal subunits (but not with 30S subunits that are part of 70S ribosomes or polysomes). Required for efficient processing of 16S rRNA. May interact with the 5'-terminal helix region of 16S rRNA. This chain is Ribosome-binding factor A, found in Francisella philomiragia subsp. philomiragia (strain ATCC 25017 / CCUG 19701 / FSC 153 / O#319-036).